The following is a 476-amino-acid chain: Chromosomal replication initiator protein DnaA (476 aa).

The interval 1–87 (MSDRSDPTHA…AGVSNFAIVV (87 aa)) is domain I, interacts with DnaA modulators. The tract at residues 87–131 (VNPGIAQDAFAQHPEPAEQPYIETPTITAPTDNPGLPASPSRGDS) is domain II. Positions 132–348 (RLNPKYGFDT…GTLIRVTAFA (217 aa)) are domain III, AAA+ region. Residues G176, G178, K179, and T180 each contribute to the ATP site. The segment at 349–476 (SLNKTPVDLA…IKQNHRYGKM (128 aa)) is domain IV, binds dsDNA.

It belongs to the DnaA family. In terms of assembly, oligomerizes as a right-handed, spiral filament on DNA at oriC.

It is found in the cytoplasm. In terms of biological role, plays an essential role in the initiation and regulation of chromosomal replication. ATP-DnaA binds to the origin of replication (oriC) to initiate formation of the DNA replication initiation complex once per cell cycle. Binds the DnaA box (a 9 base pair repeat at the origin) and separates the double-stranded (ds)DNA. Forms a right-handed helical filament on oriC DNA; dsDNA binds to the exterior of the filament while single-stranded (ss)DNA is stabiized in the filament's interior. The ATP-DnaA-oriC complex binds and stabilizes one strand of the AT-rich DNA unwinding element (DUE), permitting loading of DNA polymerase. After initiation quickly degrades to an ADP-DnaA complex that is not apt for DNA replication. Binds acidic phospholipids. The protein is Chromosomal replication initiator protein DnaA of Clavibacter sepedonicus (Clavibacter michiganensis subsp. sepedonicus).